The primary structure comprises 278 residues: Dermonecrotic toxin LbSicTox-betaIA1a (278 aa).

H12 is a catalytic residue. Mg(2+) contacts are provided by E32 and D34. Residue H48 is the Nucleophile of the active site. 2 disulfide bridges follow: C52–C58 and C54–C197. Mg(2+) is bound at residue D92. An N-linked (GlcNAc...) asparagine glycan is attached at N258.

The protein belongs to the arthropod phospholipase D family. Class II subfamily. Class IIb sub-subfamily. Expressed by the venom gland.

Its subcellular location is the secreted. It catalyses the reaction an N-(acyl)-sphingosylphosphoethanolamine = an N-(acyl)-sphingosyl-1,3-cyclic phosphate + ethanolamine. It carries out the reaction a 1-acyl-sn-glycero-3-phosphocholine = a 1-acyl-sn-glycero-2,3-cyclic phosphate + choline. The enzyme catalyses a 1-acyl-sn-glycero-3-phosphoethanolamine = a 1-acyl-sn-glycero-2,3-cyclic phosphate + ethanolamine. Functionally, this toxin does not show activity on sphingomyelin (SM) and does not show dermonecrotic activities. This toxin is a member of dermonecrotic toxins that cleave the phosphodiester linkage between the phosphate and headgroup of certain phospholipids (sphingolipid and lysolipid substrates), forming an alcohol (often choline) and a cyclic phosphate. It may act on ceramide phosphoethanolamine (CPE), lysophosphatidylcholine (LPC) and lysophosphatidylethanolamine (LPE), but not on lysophosphatidylserine (LPS), and lysophosphatidylglycerol (LPG). It may act by transphosphatidylation, releasing exclusively cyclic phosphate products as second products. The protein is Dermonecrotic toxin LbSicTox-betaIA1a of Loxosceles boneti (North American fiddleback spider).